Here is a 27-residue protein sequence, read N- to C-terminus: Caerulein precursor fragment R1 (27 aa).

As to expression, expressed by the skin glands.

The protein localises to the secreted. Its function is as follows. Antimicrobial peptide. The polypeptide is Caerulein precursor fragment R1 (Xenopus ruwenzoriensis (Uganda clawed frog)).